A 308-amino-acid chain; its full sequence is Probable manganese-dependent inorganic pyrophosphatase (308 aa).

Positions 9, 13, 15, 75, 97, and 149 each coordinate Mn(2+).

This sequence belongs to the PPase class C family. The cofactor is Mn(2+).

The protein resides in the cytoplasm. The catalysed reaction is diphosphate + H2O = 2 phosphate + H(+). The protein is Probable manganese-dependent inorganic pyrophosphatase of Listeria innocua serovar 6a (strain ATCC BAA-680 / CLIP 11262).